A 330-amino-acid polypeptide reads, in one-letter code: Ferredoxin--NADP reductase (330 aa).

Residues Thr19, Asp38, Gln46, Tyr51, Ala91, Phe129, Asp286, and Ser327 each coordinate FAD.

It belongs to the ferredoxin--NADP reductase type 2 family. Homodimer. It depends on FAD as a cofactor.

The enzyme catalyses 2 reduced [2Fe-2S]-[ferredoxin] + NADP(+) + H(+) = 2 oxidized [2Fe-2S]-[ferredoxin] + NADPH. This Nocardioides sp. (strain ATCC BAA-499 / JS614) protein is Ferredoxin--NADP reductase.